A 239-amino-acid chain; its full sequence is ATP-dependent dethiobiotin synthetase BioD (239 aa).

Residue 15–20 coordinates ATP; sequence EIGKTF. Mg(2+) is bound at residue Thr-19. Lys-40 is an active-site residue. ATP is bound by residues Asp-57, 118-121, 178-179, and 211-213; these read EGVG, NH, and AHL. Mg(2+) contacts are provided by Asp-57 and Glu-118.

The protein belongs to the dethiobiotin synthetase family. As to quaternary structure, homodimer. Mg(2+) serves as cofactor.

Its subcellular location is the cytoplasm. It carries out the reaction (7R,8S)-7,8-diammoniononanoate + CO2 + ATP = (4R,5S)-dethiobiotin + ADP + phosphate + 3 H(+). The protein operates within cofactor biosynthesis; biotin biosynthesis; biotin from 7,8-diaminononanoate: step 1/2. Functionally, catalyzes a mechanistically unusual reaction, the ATP-dependent insertion of CO2 between the N7 and N8 nitrogen atoms of 7,8-diaminopelargonic acid (DAPA, also called 7,8-diammoniononanoate) to form a ureido ring. This chain is ATP-dependent dethiobiotin synthetase BioD, found in Burkholderia vietnamiensis (strain G4 / LMG 22486) (Burkholderia cepacia (strain R1808)).